Here is a 304-residue protein sequence, read N- to C-terminus: Ribosomal RNA small subunit methyltransferase H (304 aa).

Residues 36 to 38 (GGH), Asp-53, Phe-79, Asp-98, and Gln-105 contribute to the S-adenosyl-L-methionine site.

The protein belongs to the methyltransferase superfamily. RsmH family.

Its subcellular location is the cytoplasm. The enzyme catalyses cytidine(1402) in 16S rRNA + S-adenosyl-L-methionine = N(4)-methylcytidine(1402) in 16S rRNA + S-adenosyl-L-homocysteine + H(+). In terms of biological role, specifically methylates the N4 position of cytidine in position 1402 (C1402) of 16S rRNA. The polypeptide is Ribosomal RNA small subunit methyltransferase H (Myxococcus xanthus (strain DK1622)).